The chain runs to 91 residues: Small ribosomal subunit protein bS18 (91 aa).

It belongs to the bacterial ribosomal protein bS18 family. Part of the 30S ribosomal subunit. Forms a tight heterodimer with protein bS6.

Binds as a heterodimer with protein bS6 to the central domain of the 16S rRNA, where it helps stabilize the platform of the 30S subunit. The chain is Small ribosomal subunit protein bS18 from Wolbachia sp. subsp. Brugia malayi (strain TRS).